Here is a 249-residue protein sequence, read N- to C-terminus: Bax inhibitor 1 (249 aa).

6 consecutive transmembrane segments (helical) span residues leucine 39–valine 59, glycine 65–phenylalanine 85, isoleucine 93–valine 113, isoleucine 119–isoleucine 139, glycine 151–glycine 171, and histidine 213–leucine 233.

Belongs to the BI1 family. In terms of tissue distribution, ubiquitous.

It is found in the membrane. Its function is as follows. Suppressor of apoptosis. In Oryza sativa subsp. japonica (Rice), this protein is Bax inhibitor 1 (BI1).